The sequence spans 346 residues: Protein RecA (346 aa).

Residue 67-74 coordinates ATP; the sequence is GPESSGKT.

Belongs to the RecA family.

It is found in the cytoplasm. Can catalyze the hydrolysis of ATP in the presence of single-stranded DNA, the ATP-dependent uptake of single-stranded DNA by duplex DNA, and the ATP-dependent hybridization of homologous single-stranded DNAs. It interacts with LexA causing its activation and leading to its autocatalytic cleavage. In Saccharopolyspora erythraea (strain ATCC 11635 / DSM 40517 / JCM 4748 / NBRC 13426 / NCIMB 8594 / NRRL 2338), this protein is Protein RecA.